A 522-amino-acid chain; its full sequence is Glucans biosynthesis protein G (522 aa).

The first 33 residues, 1-33 (MLVNILSKKPRAASVRWLGATVLFTLLTSPAWA), serve as a signal peptide directing secretion.

The protein belongs to the OpgD/OpgG family.

It localises to the periplasm. The protein operates within glycan metabolism; osmoregulated periplasmic glucan (OPG) biosynthesis. Its function is as follows. Involved in the biosynthesis of osmoregulated periplasmic glucans (OPGs). The sequence is that of Glucans biosynthesis protein G from Serratia proteamaculans (strain 568).